The following is a 247-amino-acid chain: 2,3-bisphosphoglycerate-dependent phosphoglycerate mutase (247 aa).

Substrate contacts are provided by residues 8–15, 21–22, Arg60, 87–90, Lys98, 114–115, and 183–184; these read RHGESTWN, TG, ERHY, RR, and GN. Residue His9 is the Tele-phosphohistidine intermediate of the active site. The Proton donor/acceptor role is filled by Glu87.

The protein belongs to the phosphoglycerate mutase family. BPG-dependent PGAM subfamily. As to quaternary structure, homodimer.

It carries out the reaction (2R)-2-phosphoglycerate = (2R)-3-phosphoglycerate. Its pathway is carbohydrate degradation; glycolysis; pyruvate from D-glyceraldehyde 3-phosphate: step 3/5. In terms of biological role, catalyzes the interconversion of 2-phosphoglycerate and 3-phosphoglycerate. This chain is 2,3-bisphosphoglycerate-dependent phosphoglycerate mutase, found in Acidovorax ebreus (strain TPSY) (Diaphorobacter sp. (strain TPSY)).